A 180-amino-acid chain; its full sequence is Der GTPase-activating protein YihI (180 aa).

Disordered stretches follow at residues 1-87 (MSRK…MTKQ) and 142-180 (GLLE…DYKG). Over residues 23–32 (NRTESDVEGR) the composition is skewed to basic and acidic residues. The segment covering 33–43 (LRKRAKKRKGL) has biased composition (basic residues). Over residues 51–68 (EVNEQKKQSSEQNRDPRL) the composition is skewed to basic and acidic residues. The segment covering 165 to 180 (DLLADFDDINFDDYKG) has biased composition (acidic residues).

This sequence belongs to the YihI family. As to quaternary structure, interacts with Der.

A GTPase-activating protein (GAP) that modifies Der/EngA GTPase function. May play a role in ribosome biogenesis. The chain is Der GTPase-activating protein YihI from Vibrio parahaemolyticus serotype O3:K6 (strain RIMD 2210633).